Consider the following 185-residue polypeptide: Probable RNA polymerase sigma-C factor (185 aa).

The Polymerase core binding signature appears at 52–65 (DLTQETFLRAIGAI). Positions 149–168 (YADAAAVCGCPVGTIRSRVA) form a DNA-binding region, H-T-H motif.

It belongs to the sigma-70 factor family. ECF subfamily.

In terms of biological role, sigma factors are initiation factors that promote the attachment of RNA polymerase to specific initiation sites and are then released. This Mycobacterium bovis (strain ATCC BAA-935 / AF2122/97) protein is Probable RNA polymerase sigma-C factor (sigC).